The sequence spans 413 residues: N5-carboxyaminoimidazole ribonucleotide synthase (413 aa).

Positions 1–21 (MKRVSEQAGNPDGNPQAHVPG) are disordered. ATP is bound by residues Lys-122, Lys-162, 199–202 (EEKV), Glu-207, and 289–290 (NE). One can recognise an ATP-grasp domain in the interval 126–319 (RERLAELGAP…QFEQHLRAVM (194 aa)).

It belongs to the PurK/PurT family. As to quaternary structure, homodimer.

The enzyme catalyses 5-amino-1-(5-phospho-beta-D-ribosyl)imidazole + hydrogencarbonate + ATP = 5-carboxyamino-1-(5-phospho-D-ribosyl)imidazole + ADP + phosphate + 2 H(+). Its pathway is purine metabolism; IMP biosynthesis via de novo pathway; 5-amino-1-(5-phospho-D-ribosyl)imidazole-4-carboxylate from 5-amino-1-(5-phospho-D-ribosyl)imidazole (N5-CAIR route): step 1/2. Catalyzes the ATP-dependent conversion of 5-aminoimidazole ribonucleotide (AIR) and HCO(3)(-) to N5-carboxyaminoimidazole ribonucleotide (N5-CAIR). This Corynebacterium ammoniagenes (Brevibacterium ammoniagenes) protein is N5-carboxyaminoimidazole ribonucleotide synthase.